We begin with the raw amino-acid sequence, 147 residues long: Fibromodulin (147 aa).

6 LRR repeats span residues 1-15 (LDHNNLTRMPGPLPR), 16-37 (SLRELHLDHNQISRVPNNALEG), 40-61 (NLTALYLQHNEIQEVGSSMRGL), 63-84 (SLILLDLSYNHLRKVPDGLPSA), 85-105 (LEQLYLEHNNVYSVPDSYFRG), and 108-128 (KLLYVRLSHNSLTNNGLASNT). Asparagine 5 is a glycosylation site (N-linked (GlcNAc...) (keratan sulfate) asparagine). Asparagine 40 carries N-linked (GlcNAc...) (keratan sulfate) asparagine glycosylation. N-linked (GlcNAc...) (keratan sulfate) asparagine glycosylation occurs at asparagine 130. An LRR 7 repeat occupies 133–147 (SLLELDLSYNQLQKI).

Belongs to the small leucine-rich proteoglycan (SLRP) family. SLRP class II subfamily. As to quaternary structure, binds to type I and type II collagen. Post-translationally, binds keratan sulfate chains.

It is found in the secreted. It localises to the extracellular space. Its subcellular location is the extracellular matrix. Functionally, affects the rate of fibrils formation. May have a primary role in collagen fibrillogenesis. The protein is Fibromodulin (FMOD) of Sus scrofa (Pig).